The sequence spans 447 residues: UPF0328 protein ECU10_1870 (447 aa).

Basic and acidic residues-rich tracts occupy residues 1 to 10 (MPSDHPDFRS) and 64 to 84 (HTEG…HTET). 2 disordered regions span residues 1–103 (MPSD…TATP) and 147–173 (VKSQ…NPRI). The span at 92 to 103 (CPPPHPGPTATP) shows a compositional bias: pro residues.

It belongs to the UPF0328 family.

The protein is UPF0328 protein ECU10_1870 of Encephalitozoon cuniculi (strain GB-M1) (Microsporidian parasite).